The following is a 482-amino-acid chain: Cysteine--tRNA ligase (482 aa).

Cys28 is a Zn(2+) binding site. The 'HIGH' region signature appears at 30–40; that stretch reads PTVYNFLHVGN. Positions 208, 233, and 237 each coordinate Zn(2+). The short motif at 265–269 is the 'KMSKS' region element; that stretch reads KMSKS. Lys268 lines the ATP pocket.

It belongs to the class-I aminoacyl-tRNA synthetase family. As to quaternary structure, monomer. The cofactor is Zn(2+).

The protein localises to the cytoplasm. The catalysed reaction is tRNA(Cys) + L-cysteine + ATP = L-cysteinyl-tRNA(Cys) + AMP + diphosphate. This chain is Cysteine--tRNA ligase, found in Bdellovibrio bacteriovorus (strain ATCC 15356 / DSM 50701 / NCIMB 9529 / HD100).